Reading from the N-terminus, the 79-residue chain is ATP synthase subunit c (79 aa).

The next 2 helical transmembrane spans lie at 11 to 31 (MAAA…IGIL) and 53 to 73 (FFIV…LGLY).

This sequence belongs to the ATPase C chain family. In terms of assembly, F-type ATPases have 2 components, F(1) - the catalytic core - and F(0) - the membrane proton channel. F(1) has five subunits: alpha(3), beta(3), gamma(1), delta(1), epsilon(1). F(0) has three main subunits: a(1), b(2) and c(10-14). The alpha and beta chains form an alternating ring which encloses part of the gamma chain. F(1) is attached to F(0) by a central stalk formed by the gamma and epsilon chains, while a peripheral stalk is formed by the delta and b chains.

The protein resides in the cell inner membrane. Its function is as follows. F(1)F(0) ATP synthase produces ATP from ADP in the presence of a proton or sodium gradient. F-type ATPases consist of two structural domains, F(1) containing the extramembraneous catalytic core and F(0) containing the membrane proton channel, linked together by a central stalk and a peripheral stalk. During catalysis, ATP synthesis in the catalytic domain of F(1) is coupled via a rotary mechanism of the central stalk subunits to proton translocation. Functionally, key component of the F(0) channel; it plays a direct role in translocation across the membrane. A homomeric c-ring of between 10-14 subunits forms the central stalk rotor element with the F(1) delta and epsilon subunits. The polypeptide is ATP synthase subunit c (Yersinia enterocolitica serotype O:8 / biotype 1B (strain NCTC 13174 / 8081)).